Consider the following 114-residue polypeptide: uncharacterized protein (114 aa).

The span at 1 to 20 (MGLSRWHDKNSRPAEEKSEE) shows a compositional bias: basic and acidic residues. Positions 1–22 (MGLSRWHDKNSRPAEEKSEEMQ) are disordered.

Its function is as follows. May be involved in phosphatase regulation and/or generation of precursor metabolites and energy. This is an uncharacterized protein from Saccharomyces cerevisiae (strain ATCC 204508 / S288c) (Baker's yeast).